Here is a 372-residue protein sequence, read N- to C-terminus: 4-hydroxy-3-methylbut-2-en-1-yl diphosphate synthase (flavodoxin) (372 aa).

The [4Fe-4S] cluster site is built by Cys270, Cys273, Cys305, and Glu312.

This sequence belongs to the IspG family. [4Fe-4S] cluster serves as cofactor.

It catalyses the reaction (2E)-4-hydroxy-3-methylbut-2-enyl diphosphate + oxidized [flavodoxin] + H2O + 2 H(+) = 2-C-methyl-D-erythritol 2,4-cyclic diphosphate + reduced [flavodoxin]. The protein operates within isoprenoid biosynthesis; isopentenyl diphosphate biosynthesis via DXP pathway; isopentenyl diphosphate from 1-deoxy-D-xylulose 5-phosphate: step 5/6. Converts 2C-methyl-D-erythritol 2,4-cyclodiphosphate (ME-2,4cPP) into 1-hydroxy-2-methyl-2-(E)-butenyl 4-diphosphate. The polypeptide is 4-hydroxy-3-methylbut-2-en-1-yl diphosphate synthase (flavodoxin) (Escherichia coli O139:H28 (strain E24377A / ETEC)).